Consider the following 259-residue polypeptide: Putative electron transfer flavoprotein subunit YgcR (259 aa).

The protein belongs to the ETF beta-subunit/FixA family. As to quaternary structure, ygcQ and YgcR form a heterodimer.

Its function is as follows. May play a role in a redox process. In Escherichia coli (strain K12), this protein is Putative electron transfer flavoprotein subunit YgcR (ygcR).